Reading from the N-terminus, the 760-residue chain is MANEIITPTEGELKTIIDKTAAYAAKLGESFENKVKQREGHNAKFNFMKEGDQYYPYYRNKIVENKAKIQADAAAAAAAANPKTPSTTTTTTTTTTATTPLPTATATTTSPTPTTSSTIVPVPQTNSTQQLQQQQQQQQQTTPVFEKPQPPPPPPPKKEPTQPDPLLYILDVPDFMTPLELDTIRLTAQFIAKNGDSFFMELASREVKNSQFDFLKPTNHLYEWFRALVESYAQIIYPPQGIKEQLKSNYFSNKQTILERAMNRCEYNQLKEIEEQKKEEREDEEKTIIASIDWHDFVIVDTIEFNEDDLDDLPQPRTFDQLIAGDTPFGGSDFDNDGHGSNGKGGQDMEMEMDMEMEMDDEDNNNNEDEIEESSLSSTNTTGNLPPKDQSKLKIVKDYQKSNSSVKSNAPTKLTQLCQFCKQEIPLDEMQEHMRIELIQKQQRDSRLGGGGSSNNNNNLTNTLTQDDDIARNLQSFASKRVDIFGETESSKKQDEQPTQAPKVIWDGHSGSIPRVQAAQQAAQLAAQQAAQQKAAAIAAQQASQQQASQQQQQQLQPPQPIGIHHHPQRHLPPGMMPPGMMPPGMMPPGMMPPGMVPPPPFGMIPPGMVPPPPPGLMIPTAPPGLMIPPTQQQQLPPQTNTSPSSSSSIKVEEPQSKKLKIDDVLIPESVWLQNNPNPVNLTVEMADKSNIYQITLQPTDSISLLKEKIKELNGMPTNKQKLQAPGLSILKDTCSIAFYNLKSLAIVTCGQKKKGGKKK.

An SURP motif 1 repeat occupies 16–58 (IIDKTAAYAAKLGESFENKVKQREGHNAKFNFMKEGDQYYPYY). Residues 77 to 147 (AAAANPKTPS…QQQTTPVFEK (71 aa)) show a composition bias toward low complexity. Positions 77 to 165 (AAAANPKTPS…PKKEPTQPDP (89 aa)) are disordered. The stretch at 183 to 225 (TIRLTAQFIAKNGDSFFMELASREVKNSQFDFLKPTNHLYEWF) is one SURP motif 2 repeat. Residues 259 to 290 (ERAMNRCEYNQLKEIEEQKKEEREDEEKTIIA) are a coiled coil. 6 disordered regions span residues 309–348 (DLDD…GGQD), 360–393 (DDED…QSKL), 442–464 (QQRD…TNTL), 487–509 (ETES…WDGH), 544–583 (SQQQ…GMMP), and 624–657 (PGLM…EPQS). The span at 360–373 (DDEDNNNNEDEIEE) shows a compositional bias: acidic residues. Composition is skewed to low complexity over residues 374–385 (SSLSSTNTTGNL) and 454–464 (SNNNNNLTNTL). A compositionally biased stretch (basic and acidic residues) spans 487–496 (ETESSKKQDE). Composition is skewed to low complexity over residues 544-557 (SQQQ…QQLQ) and 629-649 (PPTQ…SSSS). The required and sufficient for nuclear import stretch occupies residues 655-677 (PQSKKLKIDDVLIPESVWLQNNP). In terms of domain architecture, Ubiquitin-like spans 680–757 (VNLTVEMADK…VTCGQKKKGG (78 aa)).

Belongs to the SF3A1 family. In terms of assembly, component of splicing factor SF3A which associates with the splicing factor SF3B and a 12S RNA unit to form the mature 17S U2 small nuclear ribonucleoprotein complex (17S U2 snRNP). Identified in the spliceosome 'E' complex, a precursor of the spliceosome 'A' complex. Identified in the spliceosome 'A' and 'B' complexes. Identified in the spliceosome 'C' complex.

The protein localises to the nucleus. Its function is as follows. Involved in pre-mRNA splicing as a component of the splicing factor SF3A complex that contributes to the assembly of the 17S U2 snRNP, and the subsequent assembly of the spliceosome. This chain is Probable splicing factor 3A subunit 1 (sf3a1), found in Dictyostelium discoideum (Social amoeba).